The following is a 186-amino-acid chain: Probable nicotinate-nucleotide adenylyltransferase (186 aa).

Belongs to the NadD family.

It carries out the reaction nicotinate beta-D-ribonucleotide + ATP + H(+) = deamido-NAD(+) + diphosphate. It participates in cofactor biosynthesis; NAD(+) biosynthesis; deamido-NAD(+) from nicotinate D-ribonucleotide: step 1/1. Functionally, catalyzes the reversible adenylation of nicotinate mononucleotide (NaMN) to nicotinic acid adenine dinucleotide (NaAD). The polypeptide is Probable nicotinate-nucleotide adenylyltransferase (Thermus thermophilus (strain ATCC 27634 / DSM 579 / HB8)).